The chain runs to 170 residues: Adenine phosphoribosyltransferase (170 aa).

The protein belongs to the purine/pyrimidine phosphoribosyltransferase family. As to quaternary structure, homodimer.

Its subcellular location is the cytoplasm. The catalysed reaction is AMP + diphosphate = 5-phospho-alpha-D-ribose 1-diphosphate + adenine. The protein operates within purine metabolism; AMP biosynthesis via salvage pathway; AMP from adenine: step 1/1. Catalyzes a salvage reaction resulting in the formation of AMP, that is energically less costly than de novo synthesis. This is Adenine phosphoribosyltransferase from Cyanothece sp. (strain PCC 7425 / ATCC 29141).